Consider the following 1364-residue polypeptide: Collagen alpha-2(I) chain (1364 aa).

A signal peptide spans 1 to 22 (MLSFVDTRTLLLLAVTSCLATC). Gln23 is modified (pyrrolidone carboxylic acid). A propeptide spans 23–79 (QSLQEATARKGPSGDRGPRGERGPPGPPGRDGDDGIPGPPGPPGPPGPPGLGGNFAA) (N-terminal propeptide). Residues 26–1128 (QEATARKGPS…QPRSPTSLRP (1103 aa)) are disordered. A compositionally biased stretch (basic and acidic residues) spans 34–44 (PSGDRGPRGER). Pro residues predominate over residues 59–71 (PGPPGPPGPPGPP). Gln80 is subject to Pyrrolidone carboxylic acid. Lys84 carries the post-translational modification Allysine. The segment covering 93-130 (LMGPRGPPGASGAPGPQGFQGPPGEPGEPGQTGPAGAR) has biased composition (low complexity). 4-hydroxyproline occurs at positions 100, 106, 115, 118, 121, 133, 136, 145, 151, 166, 169, and 172. Positions 139-153 (AGEDGHPGKPGRPGE) are enriched in basic and acidic residues. A 5-hydroxylysine; alternate modification is found at Lys175. The O-linked (Gal...) hydroxylysine; alternate glycan is linked to Lys175. Residues Pro190 and Pro193 each carry the 4-hydroxyproline modification. A 5-hydroxylysine modification is found at Lys196. 8 positions are modified to 4-hydroxyproline: Pro199, Pro202, Pro208, Pro217, Pro226, Pro253, Pro256, and Pro259. Over residues 223–252 (VGAPGPAGARGSDGSVGPVGPAGPIGSAGP) the composition is skewed to low complexity. Lys262 carries the 5-hydroxylysine modification. Residues Pro271, Pro286, Pro295, and Pro304 each carry the 4-hydroxyproline modification. Residues 277 to 291 (AGPRGEVGLPGLSGP) show a composition bias toward low complexity. The segment covering 298-319 (PGANGLPGAKGAAGLPGVAGAP) has biased composition (low complexity). A 5-hydroxylysine modification is found at Lys307. 4-hydroxyproline is present on residues Pro313, Pro319, Pro322, Pro328, and Pro346. Over residues 328–343 (PGPVGAAGATGARGLV) the composition is skewed to low complexity. 5-hydroxylysine is present on Lys352. 4-hydroxyproline is present on residues Pro361, Pro367, Pro370, Pro391, Pro394, Pro400, Pro406, Pro439, and Pro442. Over residues 396-406 (LRGNPGSRGLP) the composition is skewed to low complexity. 2 stretches are compositionally biased toward low complexity: residues 468–487 (LPGIDGRPGPIGPAGARGEP) and 511–535 (AGLAGARGAPGPDGNNGAQGPPGLQ). A compositionally biased stretch (gly residues) spans 536–545 (GVQGGKGEQG). Composition is skewed to low complexity over residues 592-609 (PGESGAAGPTGPIGSRGP), 621-643 (EPGVVGAPGTAGPSGPSGLPGER), 666-688 (SPGRDGARGAPGAIGAPGPAGAN), and 715-735 (VGPAGPNGFAGPAGAAGQPGA). The span at 736–745 (KGERGTKGPK) shows a compositional bias: basic and acidic residues. Low complexity predominate over residues 748 to 763 (NGPVGPTGPVGAAGPS). The span at 773–782 (GSRGDGGPPG) shows a compositional bias: gly residues. Low complexity-rich tracts occupy residues 783–793 (ATGFPGAAGRT), 861–874 (PQGLLGAPGFLGLP), 891–930 (EPGPLGIAGPPGARGPPGNVGNPGVNGAPGEAGRDGNPGN), 948–961 (YPGNAGPVGAAGAP), and 978–999 (EPGPAGAVGPAGAVGPRGPSGP). Over residues 1003 to 1014 (RGDKGEPGDKGP) the composition is skewed to basic and acidic residues. The segment covering 1087-1101 (AGPPGPPGPPGPPGP) has biased composition (pro residues). The propeptide at 1118 to 1364 (DQPRSPTSLR…RLNIGPVCFK (247 aa)) is C-terminal propeptide. Residues 1131-1364 (YEVDATLKSL…RLNIGPVCFK (234 aa)) enclose the Fibrillar collagen NC1 domain. 3 disulfide bridges follow: Cys1161–Cys1193, Cys1201–Cys1362, and Cys1270–Cys1315. 5 residues coordinate Ca(2+): Asp1179, Asn1181, Gln1182, Cys1184, and Asp1187. A glycan (N-linked (GlcNAc...) asparagine) is linked at Asn1265.

It belongs to the fibrillar collagen family. Trimers of one alpha 2(I) and two alpha 1(I) chains. Interacts (via C-terminus) with TMEM131 (via PapD-L domain); the interaction is direct and is involved in assembly and TRAPPIII ER-to-Golgi transport complex-dependent secretion of collagen. Prolines at the third position of the tripeptide repeating unit (G-X-Y) are hydroxylated in some or all of the chains. In terms of tissue distribution, forms the fibrils of tendon, ligaments and bones. In bones the fibrils are mineralized with calcium hydroxyapatite.

The protein localises to the secreted. The protein resides in the extracellular space. It is found in the extracellular matrix. Functionally, type I collagen is a member of group I collagen (fibrillar forming collagen). The protein is Collagen alpha-2(I) chain (COL1A2) of Bos taurus (Bovine).